The sequence spans 344 residues: Heat-inducible transcription repressor HrcA (344 aa).

Belongs to the HrcA family.

Negative regulator of class I heat shock genes (grpE-dnaK-dnaJ and groELS operons). Prevents heat-shock induction of these operons. This Anoxybacillus flavithermus (strain DSM 21510 / WK1) protein is Heat-inducible transcription repressor HrcA.